The following is a 248-amino-acid chain: Pulmonary surfactant-associated protein A (248 aa).

The signal sequence occupies residues 1 to 20; the sequence is MLLCSLTLTLILLAVSGTKC. Positions 31–100 constitute a Collagen-like domain; that stretch reads GVPGIPGSPG…PGERGPPGPP (70 aa). Residues 34–105 are disordered; it reads GIPGSPGLPG…PPGPPAYPDE (72 aa). The segment covering 54–65 has biased composition (pro residues); that stretch reads PGPPGPIGPPGG. A compositionally biased stretch (basic and acidic residues) spans 84-93; sequence ERGDKGEPGE. Positions 134–247 constitute a C-type lectin domain; sequence VGEKVFSTNG…CLQYRLAICE (114 aa). Disulfide bonds link Cys155/Cys246 and Cys224/Cys238. A glycan (N-linked (GlcNAc...) asparagine) is linked at Asn207. The Ca(2+) site is built by Glu215, Arg217, Asn234, and Asp235.

This sequence belongs to the SFTPA family. Oligomeric complex of 6 set of homotrimers.

Its subcellular location is the secreted. It is found in the extracellular space. The protein localises to the extracellular matrix. The protein resides in the surface film. Functionally, in presence of calcium ions, it binds to surfactant phospholipids and contributes to lower the surface tension at the air-liquid interface in the alveoli of the mammalian lung and is essential for normal respiration. Enhances the expression of MYO18A/SP-R210 on alveolar macrophages. The polypeptide is Pulmonary surfactant-associated protein A (SFTPA1) (Equus caballus (Horse)).